The primary structure comprises 912 residues: Translation initiation factor IF-2 (912 aa).

The disordered stretch occupies residues 26-297 (SDQGEFVKSA…RGRKSKRAKR (272 aa)). The span at 56-74 (KPAPAASNGAAAEAAAPPK) shows a compositional bias: low complexity. Pro residues predominate over residues 100–120 (APEPPAAPAAPAAPAPKPSPA). Positions 121–131 (ARPAAAEAAAP) are enriched in low complexity. Pro residues-rich tracts occupy residues 132 to 152 (APAPAPAPRPGATPGPKPGAP), 173 to 183 (PRPQAPRPGAP), and 192 to 218 (NMPPRPSPGSMGPRPPRPGGGPRPGGG). The segment covering 219–283 (PRPGGAGRPG…GAAGAFGRPG (65 aa)) has biased composition (gly residues). A compositionally biased stretch (basic residues) spans 287 to 296 (KRGRKSKRAK). The region spanning 408–579 (TRPPVVTVMG…AVLLTADAAL (172 aa)) is the tr-type G domain. The segment at 417-424 (GHVDHGKT) is G1. 417-424 (GHVDHGKT) serves as a coordination point for GTP. The G2 stretch occupies residues 442 to 446 (GITQH). A G3 region spans residues 467-470 (DTPG). Residues 467–471 (DTPGH) and 521–524 (NKID) each bind GTP. Residues 521 to 524 (NKID) are G4. Residues 557-559 (SAR) are G5.

Belongs to the TRAFAC class translation factor GTPase superfamily. Classic translation factor GTPase family. IF-2 subfamily.

Its subcellular location is the cytoplasm. One of the essential components for the initiation of protein synthesis. Protects formylmethionyl-tRNA from spontaneous hydrolysis and promotes its binding to the 30S ribosomal subunits. Also involved in the hydrolysis of GTP during the formation of the 70S ribosomal complex. The chain is Translation initiation factor IF-2 from Mycobacteroides abscessus (strain ATCC 19977 / DSM 44196 / CCUG 20993 / CIP 104536 / JCM 13569 / NCTC 13031 / TMC 1543 / L948) (Mycobacterium abscessus).